A 436-amino-acid polypeptide reads, in one-letter code: Protein VHS2 (436 aa).

The interval 1–34 (MDTSNHNQDHDSHVAAQRENDNNYMPPSPSMSES) is disordered. Over residues 7–21 (NQDHDSHVAAQREND) the composition is skewed to basic and acidic residues. 4 positions are modified to phosphoserine: serine 53, serine 61, serine 102, and serine 172. Disordered regions lie at residues 165–195 (RALGRTRSLSSQSFDNETSPAHPRSPNDHGS), 211–266 (NNNN…HMNF), 282–360 (NNAN…EEDN), and 389–436 (NDNH…DTTK). Positions 171–183 (RSLSSQSFDNETS) are enriched in polar residues. 3 stretches are compositionally biased toward low complexity: residues 211–226 (NNNNVSNATSTSSTAN), 238–261 (SFSSSLLNSPSHLPSPPSASASPP), and 282–299 (NNANGGTSAGSTTGAALS). Phosphoserine is present on residues serine 299, serine 301, serine 303, and serine 325. Polar residues predominate over residues 300–312 (RSPSNQQYLLKQQ). Positions 401–436 (TINNNIKNSPAFTNSNPSSKSNSNSTITSMNPDTTK) are enriched in low complexity.

This sequence to yeast MFL3.

It localises to the cytoplasm. Can suppress the synthetic lethality of the hal3 sit4 double mutation when overexpressed, suggesting that it is involved in the G1-S transition. The chain is Protein VHS2 (VHS2) from Saccharomyces cerevisiae (strain ATCC 204508 / S288c) (Baker's yeast).